Here is a 272-residue protein sequence, read N- to C-terminus: Putative phosphoenolpyruvate synthase regulatory protein (272 aa).

Position 152–159 (152–159 (GVSRCGKT)) interacts with ADP.

This sequence belongs to the pyruvate, phosphate/water dikinase regulatory protein family. PSRP subfamily.

The enzyme catalyses [pyruvate, water dikinase] + ADP = [pyruvate, water dikinase]-phosphate + AMP + H(+). It carries out the reaction [pyruvate, water dikinase]-phosphate + phosphate + H(+) = [pyruvate, water dikinase] + diphosphate. Functionally, bifunctional serine/threonine kinase and phosphorylase involved in the regulation of the phosphoenolpyruvate synthase (PEPS) by catalyzing its phosphorylation/dephosphorylation. This is Putative phosphoenolpyruvate synthase regulatory protein from Pseudomonas fluorescens (strain SBW25).